Consider the following 193-residue polypeptide: dCTP deaminase (193 aa).

DCTP is bound by residues 110-115 (RSSLAR), Asp128, 136-138 (VLE), Tyr171, Lys178, and Gln182. The active-site Proton donor/acceptor is the Glu138. The tract at residues 169–193 (RPYNRRQDAKYKDQQGAVASRIDKD) is disordered.

Belongs to the dCTP deaminase family. In terms of assembly, homotrimer.

The enzyme catalyses dCTP + H2O + H(+) = dUTP + NH4(+). The protein operates within pyrimidine metabolism; dUMP biosynthesis; dUMP from dCTP (dUTP route): step 1/2. In terms of biological role, catalyzes the deamination of dCTP to dUTP. In Pectobacterium carotovorum subsp. carotovorum (strain PC1), this protein is dCTP deaminase.